The primary structure comprises 444 residues: D(2) dopamine receptor (444 aa).

The Extracellular segment spans residues M1–Y37. N-linked (GlcNAc...) asparagine glycosylation is found at N5, N17, and N23. Residues A38–S60 traverse the membrane as a helical segment. Over R61–N70 the chain is Cytoplasmic. A helical membrane pass occupies residues Y71 to Y93. The Extracellular portion of the chain corresponds to L94–D108. A disulfide bond links C107 and C182. The chain crosses the membrane as a helical span at residues I109–I130. At D131–R151 the chain is on the cytoplasmic side. Residues V152–F172 traverse the membrane as a helical segment. The Extracellular portion of the chain corresponds to G173–A188. The helical transmembrane segment at F189 to Y213 threads the bilayer. The segment at K211–Q374 is interaction with PPP1R9B. The Cytoplasmic segment spans residues I214–Q374. Residues E282–G329 form a disordered region. A helical transmembrane segment spans residues M375–L396. Residues N397–S410 are Extracellular-facing. A disulfide bridge connects residues C400 and C402. The helical transmembrane segment at A411–I432 threads the bilayer. At E433 to C444 the chain is on the cytoplasmic side. C444 carries S-palmitoyl cysteine lipidation.

This sequence belongs to the G-protein coupled receptor 1 family. In terms of assembly, forms homo- and heterooligomers with DRD4. The interaction with DRD4 may modulate agonist-induced downstream signaling. Interacts with CADPS and CADPS2. Interacts with GPRASP1, PPP1R9B and CLIC6. Interacts with ARRB2. Interacts with HTR2A. Interacts with DRD1. Interacts with KCNA2. Post-translationally, palmitoylated. Palmitoylation which is required for proper localization to the plasma membrane and stability of the receptor could be carried on by ZDHHC4, ZDHHC3 and ZDHHC8. Expressed in the anterior lobe of the pituitary gland. Expressed ventral tegmental area of the midbrain and the pars compacta of the substantia nigra. Expressed seven times more than isoform short in the caudate nucleus. As to expression, expressed in the anterior lobe of the pituitary gland. Expressed in the caudate nucleus. Not expressed in the wider brain.

The protein localises to the cell membrane. The protein resides in the golgi apparatus membrane. Its function is as follows. Dopamine receptor whose activity is mediated by G proteins which inhibit adenylyl cyclase. Positively regulates postnatal regression of retinal hyaloid vessels via suppression of VEGFR2/KDR activity, downstream of OPN5. This is D(2) dopamine receptor (Drd2) from Rattus norvegicus (Rat).